A 182-amino-acid chain; its full sequence is Endoribonuclease YbeY (182 aa).

The Zn(2+) site is built by His115, His119, and His125.

Belongs to the endoribonuclease YbeY family. Zn(2+) serves as cofactor.

It is found in the cytoplasm. In terms of biological role, single strand-specific metallo-endoribonuclease involved in late-stage 70S ribosome quality control and in maturation of the 3' terminus of the 16S rRNA. This chain is Endoribonuclease YbeY, found in Bifidobacterium longum (strain NCC 2705).